The primary structure comprises 121 residues: Small ribosomal subunit protein uS13 (121 aa).

Residues 89–121 form a disordered region; the sequence is RRHRMSLPVRGQRTRTNARTRRGSRKTVAGRKK. The span at 100-121 shows a compositional bias: basic residues; that stretch reads QRTRTNARTRRGSRKTVAGRKK.

It belongs to the universal ribosomal protein uS13 family. Part of the 30S ribosomal subunit. Forms a loose heterodimer with protein S19. Forms two bridges to the 50S subunit in the 70S ribosome.

Its function is as follows. Located at the top of the head of the 30S subunit, it contacts several helices of the 16S rRNA. In the 70S ribosome it contacts the 23S rRNA (bridge B1a) and protein L5 of the 50S subunit (bridge B1b), connecting the 2 subunits; these bridges are implicated in subunit movement. Contacts the tRNAs in the A and P-sites. This is Small ribosomal subunit protein uS13 from Prochlorococcus marinus subsp. pastoris (strain CCMP1986 / NIES-2087 / MED4).